The sequence spans 199 residues: Adenylyl-sulfate kinase (199 aa).

Residue 34–41 coordinates ATP; that stretch reads GLSGSGKS. The active-site Phosphoserine intermediate is the Ser-108.

Belongs to the APS kinase family.

It carries out the reaction adenosine 5'-phosphosulfate + ATP = 3'-phosphoadenylyl sulfate + ADP + H(+). It participates in sulfur metabolism; hydrogen sulfide biosynthesis; sulfite from sulfate: step 2/3. In terms of biological role, catalyzes the synthesis of activated sulfate. The sequence is that of Adenylyl-sulfate kinase from Staphylococcus carnosus (strain TM300).